The chain runs to 952 residues: Valine--tRNA ligase (952 aa).

The 'HIGH' region signature appears at P45 to H55. Positions K571–S575 match the 'KMSKS' region motif. Position 574 (K574) interacts with ATP. Residues K894–A950 are a coiled coil.

This sequence belongs to the class-I aminoacyl-tRNA synthetase family. ValS type 1 subfamily. In terms of assembly, monomer.

The protein localises to the cytoplasm. The enzyme catalyses tRNA(Val) + L-valine + ATP = L-valyl-tRNA(Val) + AMP + diphosphate. Functionally, catalyzes the attachment of valine to tRNA(Val). As ValRS can inadvertently accommodate and process structurally similar amino acids such as threonine, to avoid such errors, it has a 'posttransfer' editing activity that hydrolyzes mischarged Thr-tRNA(Val) in a tRNA-dependent manner. In Nitrobacter winogradskyi (strain ATCC 25391 / DSM 10237 / CIP 104748 / NCIMB 11846 / Nb-255), this protein is Valine--tRNA ligase.